The following is a 254-amino-acid chain: Leucyl/phenylalanyl-tRNA--protein transferase (254 aa).

The protein belongs to the L/F-transferase family.

The protein resides in the cytoplasm. It carries out the reaction N-terminal L-lysyl-[protein] + L-leucyl-tRNA(Leu) = N-terminal L-leucyl-L-lysyl-[protein] + tRNA(Leu) + H(+). The enzyme catalyses N-terminal L-arginyl-[protein] + L-leucyl-tRNA(Leu) = N-terminal L-leucyl-L-arginyl-[protein] + tRNA(Leu) + H(+). The catalysed reaction is L-phenylalanyl-tRNA(Phe) + an N-terminal L-alpha-aminoacyl-[protein] = an N-terminal L-phenylalanyl-L-alpha-aminoacyl-[protein] + tRNA(Phe). Its function is as follows. Functions in the N-end rule pathway of protein degradation where it conjugates Leu, Phe and, less efficiently, Met from aminoacyl-tRNAs to the N-termini of proteins containing an N-terminal arginine or lysine. This Burkholderia orbicola (strain MC0-3) protein is Leucyl/phenylalanyl-tRNA--protein transferase.